Reading from the N-terminus, the 175-residue chain is Ribosome maturation factor RimM (175 aa).

The 79-residue stretch at 97-175 folds into the PRC barrel domain; the sequence is EGEFYWHQLE…RMVVDWDPEF (79 aa).

The protein belongs to the RimM family. Binds ribosomal protein uS19.

The protein localises to the cytoplasm. An accessory protein needed during the final step in the assembly of 30S ribosomal subunit, possibly for assembly of the head region. Essential for efficient processing of 16S rRNA. May be needed both before and after RbfA during the maturation of 16S rRNA. It has affinity for free ribosomal 30S subunits but not for 70S ribosomes. The sequence is that of Ribosome maturation factor RimM from Marinobacter nauticus (strain ATCC 700491 / DSM 11845 / VT8) (Marinobacter aquaeolei).